Reading from the N-terminus, the 131-residue chain is MKKHGMLNSHIAKVLADLGHTDLIAIADAGLPVPDGAPKIDLSLTAGVPAFRDVTSLVAGEMAVEKVIAASEIKDANPENASFIESHFSAQTIEYMSHEEFKRLTQKAKAVIRTGEMTPYANCILQAGVIF.

Histidine 20 functions as the Proton donor in the catalytic mechanism. Substrate-binding positions include aspartate 28, histidine 98, and 120 to 122 (YAN).

This sequence belongs to the RbsD / FucU family. RbsD subfamily. As to quaternary structure, homodecamer.

It is found in the cytoplasm. The catalysed reaction is beta-D-ribopyranose = beta-D-ribofuranose. Its pathway is carbohydrate metabolism; D-ribose degradation; D-ribose 5-phosphate from beta-D-ribopyranose: step 1/2. Its function is as follows. Catalyzes the interconversion of beta-pyran and beta-furan forms of D-ribose. The protein is D-ribose pyranase of Bacillus velezensis (strain DSM 23117 / BGSC 10A6 / LMG 26770 / FZB42) (Bacillus amyloliquefaciens subsp. plantarum).